The following is a 363-amino-acid chain: Protein-glutamate methylesterase/protein-glutamine glutaminase 2 (363 aa).

The 118-residue stretch at 7–124 folds into the Response regulatory domain; sequence RVLVVDDSAL…SLTLENVADE (118 aa). 4-aspartylphosphate is present on Asp58. The 198-residue stretch at 160–357 folds into the CheB-type methylesterase domain; sequence PVASRTTPSK…NLLMVQSAAQ (198 aa). Catalysis depends on residues Ser176, His203, and Asp299.

The protein belongs to the CheB family. Phosphorylated by CheA. Phosphorylation of the N-terminal regulatory domain activates the methylesterase activity.

It is found in the cytoplasm. It catalyses the reaction [protein]-L-glutamate 5-O-methyl ester + H2O = L-glutamyl-[protein] + methanol + H(+). The enzyme catalyses L-glutaminyl-[protein] + H2O = L-glutamyl-[protein] + NH4(+). Involved in chemotaxis. Part of a chemotaxis signal transduction system that modulates chemotaxis in response to various stimuli. Catalyzes the demethylation of specific methylglutamate residues introduced into the chemoreceptors (methyl-accepting chemotaxis proteins or MCP) by CheR. Also mediates the irreversible deamidation of specific glutamine residues to glutamic acid. The sequence is that of Protein-glutamate methylesterase/protein-glutamine glutaminase 2 from Koribacter versatilis (strain Ellin345).